Reading from the N-terminus, the 96-residue chain is Protein Vpr (96 aa).

The tract at residues 1–42 (MEQAPEDQGPQREPYNEWTLELLEELKREAVRHFPRPWLHGL) is homooligomerization. A phosphoserine; by host mark is found at Ser-79, Ser-94, and Ser-96.

This sequence belongs to the HIV-1 VPR protein family. In terms of assembly, homooligomer, may form homodimer. Interacts with p6-gag region of the Pr55 Gag precursor protein through a (Leu-X-X)4 motif near the C-terminus of the P6gag protein. Interacts with host UNG. May interact with host RAD23A/HHR23A. Interacts with host VPRBP/DCAF1, leading to hijack the CUL4A-RBX1-DDB1-DCAF1/VPRBP complex, mediating ubiquitination of host proteins such as TERT and ZGPAT and arrest of the cell cycle in G2 phase. Phosphorylated on several residues by host. These phosphorylations regulate VPR activity for the nuclear import of the HIV-1 pre-integration complex.

Its subcellular location is the virion. It is found in the host nucleus. It localises to the host extracellular space. Functionally, during virus replication, may deplete host UNG protein, and incude G2-M cell cycle arrest. Acts by targeting specific host proteins for degradation by the 26S proteasome, through association with the cellular CUL4A-DDB1 E3 ligase complex by direct interaction with host VPRPB/DCAF-1. Cell cycle arrest reportedly occurs within hours of infection and is not blocked by antiviral agents, suggesting that it is initiated by the VPR carried into the virion. Additionally, VPR induces apoptosis in a cell cycle dependent manner suggesting that these two effects are mechanistically linked. Detected in the serum and cerebrospinal fluid of AIDS patient, VPR may also induce cell death to bystander cells. In terms of biological role, during virus entry, plays a role in the transport of the viral pre-integration (PIC) complex to the host nucleus. This function is crucial for viral infection of non-dividing macrophages. May act directly at the nuclear pore complex, by binding nucleoporins phenylalanine-glycine (FG)-repeat regions. This is Protein Vpr from Human immunodeficiency virus type 1 group M subtype C (isolate 92BR025) (HIV-1).